A 215-amino-acid polypeptide reads, in one-letter code: Vesicle-trafficking protein SEC22b (215 aa).

Residues 2–194 (VLLTMIARVA…KYLNMRSTYA (193 aa)) lie on the Cytoplasmic side of the membrane. The 114-residue stretch at 6 to 119 (MIARVADGLP…YSFIEFDTFI (114 aa)) folds into the Longin domain. K38 is modified (N6-acetyllysine). The v-SNARE coiled-coil homology domain maps to 134–194 (NLGSINTELQ…KYLNMRSTYA (61 aa)). S137 carries the phosphoserine modification. T140 bears the Phosphothreonine mark. Phosphoserine occurs at positions 164, 168, 174, and 177. The chain crosses the membrane as a helical; Anchor for type IV membrane protein span at residues 195-215 (KLAAVAVFFIMLIVYVRFWWL).

The protein belongs to the synaptobrevin family. As to quaternary structure, interacts with STX17. Component of two distinct SNARE complexes consisting of STX5, GOSR2/BOS1, BET1 and SEC22B or STX18, USE1L, BNIP1/SEC20L and SEC22B. YKT6 can probably replace SEC22B in either complex. Interacts with the COPII Sec23/24 complex composed of SEC23A and SEC24A; recruits SEC22B into COPII-coated vesicles to allow its transport from the endoplasmic reticulum to the Golgi. Interacts with BET1.

The protein resides in the endoplasmic reticulum membrane. The protein localises to the endoplasmic reticulum-Golgi intermediate compartment membrane. Its subcellular location is the golgi apparatus. It is found in the cis-Golgi network membrane. It localises to the trans-Golgi network membrane. The protein resides in the melanosome. In terms of biological role, SNARE involved in targeting and fusion of ER-derived transport vesicles with the Golgi complex as well as Golgi-derived retrograde transport vesicles with the ER. This is Vesicle-trafficking protein SEC22b (SEC22B) from Homo sapiens (Human).